Reading from the N-terminus, the 283-residue chain is Probable protein phosphatase 2C 17 (283 aa).

Residues 32 to 282 enclose the PPM-type phosphatase domain; it reads KYGFSLIKGK…DDISCIVVRF (251 aa). D69, G70, D234, and D273 together coordinate Mn(2+).

This sequence belongs to the PP2C family. Requires Mg(2+) as cofactor. It depends on Mn(2+) as a cofactor.

It catalyses the reaction O-phospho-L-seryl-[protein] + H2O = L-seryl-[protein] + phosphate. It carries out the reaction O-phospho-L-threonyl-[protein] + H2O = L-threonyl-[protein] + phosphate. In Arabidopsis thaliana (Mouse-ear cress), this protein is Probable protein phosphatase 2C 17.